The chain runs to 122 residues: Large ribosomal subunit protein bL12 (122 aa).

Belongs to the bacterial ribosomal protein bL12 family. In terms of assembly, homodimer. Part of the ribosomal stalk of the 50S ribosomal subunit. Forms a multimeric L10(L12)X complex, where L10 forms an elongated spine to which 2 to 4 L12 dimers bind in a sequential fashion. Binds GTP-bound translation factors.

Forms part of the ribosomal stalk which helps the ribosome interact with GTP-bound translation factors. Is thus essential for accurate translation. In Blochmanniella pennsylvanica (strain BPEN), this protein is Large ribosomal subunit protein bL12.